Consider the following 378-residue polypeptide: AA13 family lytic polysaccharide monooxygenase A (378 aa).

An N-terminal signal peptide occupies residues 1–17 (MKWSVIQALALASGVQA). Residue His-18 participates in Cu(2+) binding. His-18 carries the post-translational modification Methylhistidine. The Chitin-binding type-4 domain occupies 18 to 244 (HGYLTFPMSR…PQIYLTCADI (227 aa)). Cystine bridges form between Cys-39–Cys-42, Cys-65–Cys-241, Cys-101–Cys-199, Cys-117–Cys-144, Cys-152–Cys-160, Cys-166–Cys-172, and Cys-180–Cys-188. Residue His-108 participates in Cu(2+) binding. N-linked (GlcNAc...) asparagine glycosylation is present at Asn-221. Tyr-238 contacts Cu(2+). Residues 250 to 263 (DSQSPPTTTTTSTP) are compositionally biased toward low complexity. A disordered region spans residues 250–272 (DSQSPPTTTTTSTPASPPPTSCA). The CBM20 domain occupies 272–378 (ATPAASVAVT…GTATVDTAWK (107 aa)).

It belongs to the polysaccharide monooxygenase AA13 family. The cofactor is Cu(2+). Post-translationally, O-mannosylated.

It localises to the secreted. The catalysed reaction is starch + reduced acceptor + O2 = D-glucono-1,5-lactone-terminated malto-oligosaccharides + short-chain malto-oligosaccharides + acceptor + H2O.. Activity is inhibited by both beta-cyclodextrin or amylose that block the access to the active site. Its function is as follows. Starch-active lytic polysaccharide monooxygenase that oxidizes the C1 position of starch substrates. Catalysis by LPMOs requires the reduction of the active-site copper from Cu(II) to Cu(I) by a reducing agent and H(2)O(2) or O(2) as a cosubstrate. The chain is AA13 family lytic polysaccharide monooxygenase A from Pyricularia oryzae (strain 70-15 / ATCC MYA-4617 / FGSC 8958) (Rice blast fungus).